The following is a 510-amino-acid chain: 2,3-bisphosphoglycerate-independent phosphoglycerate mutase (510 aa).

Positions 14 and 64 each coordinate Mn(2+). Catalysis depends on S64, which acts as the Phosphoserine intermediate. Substrate is bound by residues H125, 155-156, R187, R193, 259-262, and K332; these read RD and RADR. The Mn(2+) site is built by D399, H403, D440, H441, and H459.

The protein belongs to the BPG-independent phosphoglycerate mutase family. In terms of assembly, monomer. Mn(2+) is required as a cofactor.

The enzyme catalyses (2R)-2-phosphoglycerate = (2R)-3-phosphoglycerate. Its pathway is carbohydrate degradation; glycolysis; pyruvate from D-glyceraldehyde 3-phosphate: step 3/5. In terms of biological role, catalyzes the interconversion of 2-phosphoglycerate and 3-phosphoglycerate. This is 2,3-bisphosphoglycerate-independent phosphoglycerate mutase from Ectopseudomonas mendocina (strain ymp) (Pseudomonas mendocina).